Here is an 87-residue protein sequence, read N- to C-terminus: U1-theraphotoxin-Ct1a (87 aa).

Residues 1 to 23 (MKTFTLIAILTCAVLVIFHAAAA) form the signal peptide. Positions 24–48 (EELEVQDVIQPEDTLTGLATLDEDR) are excised as a propeptide.

The protein belongs to the neurotoxin 12 (Hwtx-2) family. 03 (juruin) subfamily. Post-translationally, contains 3 disulfide bonds. Two different connectivities are observed in similar proteins (C1-C3, C2-C5, C4-C6 or C1-C4, C2-C5, C3-C6). In terms of tissue distribution, expressed by the venom gland.

Its subcellular location is the secreted. Functionally, this toxin causes paralysis and death to sheep blowflies. It may inhibit voltage-gated calcium channels. This is U1-theraphotoxin-Ct1a from Coremiocnemis tropix (Australian tarantula spider).